The primary structure comprises 336 residues: Toluate 1,2-dioxygenase electron transfer component (336 aa).

The 95-residue stretch at His3 to Ser97 folds into the 2Fe-2S ferredoxin-type domain. [2Fe-2S] cluster is bound by residues Cys40, Cys45, Cys48, and Cys81. A ferredoxin-reductase region spans residues Val99 to Ala336. The FAD-binding FR-type domain maps to Gln104–Arg204.

Belongs to the bacterial ring-hydroxylating dioxygenase ferredoxin reductase family. As to quaternary structure, this dioxygenase system consists of three proteins: the two subunits of the hydroxylase component (XylX and XylY), and an electron transfer component (XylZ). Requires FAD as cofactor. It depends on [2Fe-2S] cluster as a cofactor.

The enzyme catalyses 2 reduced [2Fe-2S]-[ferredoxin] + NAD(+) + H(+) = 2 oxidized [2Fe-2S]-[ferredoxin] + NADH. Functionally, electron transfer component of toluate 1,2-dioxygenase system. The chain is Toluate 1,2-dioxygenase electron transfer component (xylZ) from Pseudomonas putida (Arthrobacter siderocapsulatus).